The chain runs to 486 residues: Glutamyl-tRNA(Gln) amidotransferase subunit A (486 aa).

Catalysis depends on charge relay system residues lysine 79 and serine 154. Serine 178 serves as the catalytic Acyl-ester intermediate.

This sequence belongs to the amidase family. GatA subfamily. As to quaternary structure, heterotrimer of A, B and C subunits.

The enzyme catalyses L-glutamyl-tRNA(Gln) + L-glutamine + ATP + H2O = L-glutaminyl-tRNA(Gln) + L-glutamate + ADP + phosphate + H(+). Its function is as follows. Allows the formation of correctly charged Gln-tRNA(Gln) through the transamidation of misacylated Glu-tRNA(Gln) in organisms which lack glutaminyl-tRNA synthetase. The reaction takes place in the presence of glutamine and ATP through an activated gamma-phospho-Glu-tRNA(Gln). This Dehalococcoides mccartyi (strain ATCC BAA-2266 / KCTC 15142 / 195) (Dehalococcoides ethenogenes (strain 195)) protein is Glutamyl-tRNA(Gln) amidotransferase subunit A.